The sequence spans 635 residues: Threonine--tRNA ligase (635 aa).

A TGS domain is found at 1-61 (MVSIRLPDGS…DRDASLAIVT (61 aa)). The catalytic stretch occupies residues 242 to 533 (DHRKLGKQLD…LIEHHAGAMP (292 aa)). Positions 333, 384, and 510 each coordinate Zn(2+).

It belongs to the class-II aminoacyl-tRNA synthetase family. Homodimer. It depends on Zn(2+) as a cofactor.

The protein resides in the cytoplasm. The catalysed reaction is tRNA(Thr) + L-threonine + ATP = L-threonyl-tRNA(Thr) + AMP + diphosphate + H(+). Its function is as follows. Catalyzes the attachment of threonine to tRNA(Thr) in a two-step reaction: L-threonine is first activated by ATP to form Thr-AMP and then transferred to the acceptor end of tRNA(Thr). Also edits incorrectly charged L-seryl-tRNA(Thr). The polypeptide is Threonine--tRNA ligase (Burkholderia orbicola (strain MC0-3)).